We begin with the raw amino-acid sequence, 443 residues long: Tol-Pal system protein TolB (443 aa).

The first 33 residues, 1–33 (MKIGIINTKIRTVFSAFACMIAASLVCTMPARA), serve as a signal peptide directing secretion.

It belongs to the TolB family. The Tol-Pal system is composed of five core proteins: the inner membrane proteins TolA, TolQ and TolR, the periplasmic protein TolB and the outer membrane protein Pal. They form a network linking the inner and outer membranes and the peptidoglycan layer.

The protein localises to the periplasm. Its function is as follows. Part of the Tol-Pal system, which plays a role in outer membrane invagination during cell division and is important for maintaining outer membrane integrity. The protein is Tol-Pal system protein TolB of Brucella suis biovar 1 (strain 1330).